We begin with the raw amino-acid sequence, 118 residues long: Phospholipase A2 'basic' (118 aa).

7 disulfides stabilise this stretch: Cys11–Cys70, Cys26–Cys117, Cys28–Cys44, Cys43–Cys98, Cys50–Cys91, Cys59–Cys84, and Cys77–Cys89. Ca(2+)-binding residues include Tyr27, Gly29, and Gly31. His47 is an active-site residue. Residue Asp48 coordinates Ca(2+). The Coagulation factor Xa binding motif signature appears at 52 to 69; that stretch reads EKAGKMGCWPYLTLYKYK. Asp92 is an active-site residue.

The protein belongs to the phospholipase A2 family. Group I subfamily. D49 sub-subfamily. Requires Ca(2+) as cofactor. Expressed by the venom gland.

Its subcellular location is the secreted. It carries out the reaction a 1,2-diacyl-sn-glycero-3-phosphocholine + H2O = a 1-acyl-sn-glycero-3-phosphocholine + a fatty acid + H(+). Snake venom phospholipase A2 (PLA2) that shows strong anticoagulant activity. Binds directly with the coagulation factor FXa (F10) and blocks the formation of the prothombinase complex. Acts by a nonenzymatic mechanism. Also inhibits the complex composed of tissue factor (F3) and coagulation factor VIIa (F7) (TF-VIIa complex) by both enzymatic and nonenzymatic mechanisms. PLA2 catalyzes the calcium-dependent hydrolysis of the 2-acyl groups in 3-sn-phosphoglycerides. This Naja nigricollis (Black-necked spitting cobra) protein is Phospholipase A2 'basic'.